The following is a 194-amino-acid chain: MKLILASTSPYRKNILEKLCIPFSCASPSADETPMNNESANTLVARLAAEKALSVGVTQKGLIIGSDQVACVDGVILGKPGNKLKAFDQLTQLSGKTVTFFTGLSLLDSKTQRQETIVETFDVIFKSLSAKQISRYLELEEPYDCAGSFKSEGLGIALFSSLDGRDPNTLIGLPLIALVAMLKKFEIDVFEHMQ.

The active-site Proton acceptor is Asp-67.

This sequence belongs to the Maf family. YceF subfamily. A divalent metal cation serves as cofactor.

The protein localises to the cytoplasm. It carries out the reaction N(7)-methyl-GTP + H2O = N(7)-methyl-GMP + diphosphate + H(+). Functionally, nucleoside triphosphate pyrophosphatase that hydrolyzes 7-methyl-GTP (m(7)GTP). May have a dual role in cell division arrest and in preventing the incorporation of modified nucleotides into cellular nucleic acids. The chain is 7-methyl-GTP pyrophosphatase from Pseudoalteromonas atlantica (strain T6c / ATCC BAA-1087).